The primary structure comprises 490 residues: MAVSSDAEQKFDRVKTQLKARLGAEVYSSWFGRMKVAEASKGIVRISVPTAFLRSWINGHYLDLISELWKQEDADLLKIEIVVRTATRQGRSHAEPELAPARKMTRQTQTALAAGTVSPGRVERPPVPRPGAAVESEFRHNVLGSPLDPRYTFGSFIEGPSNRVAFAAAKAVAESQSSAVRFNPLFLHATVGLGKTHLLQAIAAESLKQNPKSRVVYLTAEYFMWRFATAIRDNNALTLKEQLRDIDLLIIDDMQFLQGKSIQHEFCHLINMLLDSAKQVVVAADRPPSELESLEPRVRSRLNGGVALEMSAPDFAMRLGMLKLRLATARIDDASLDISDEILNHVARTVTGSGRELEGAFNQLLFRQSFEPQITIDRIDEILGHIYRTGEPKRVRIEDIQRIVARHYNVSKTELLSNRRTRTIVKPRQVAMYLSKVMTPRSLPEIGRRFGGRDHTTVLHAVRKIEDLSGNDNTLAQELELLRRLINDQA.

The tract at residues 1-75 (MAVSSDAEQK…SELWKQEDAD (75 aa)) is domain I, interacts with DnaA modulators. A domain II region spans residues 75–145 (DLLKIEIVVR…SEFRHNVLGS (71 aa)). The domain III, AAA+ region stretch occupies residues 146-368 (PLDPRYTFGS…GAFNQLLFRQ (223 aa)). Residues G192, G194, K195, and T196 each contribute to the ATP site. Positions 369–490 (SFEPQITIDR…LLRRLINDQA (122 aa)) are domain IV, binds dsDNA.

Belongs to the DnaA family. Oligomerizes as a right-handed, spiral filament on DNA at oriC.

It is found in the cytoplasm. Its function is as follows. Plays an essential role in the initiation and regulation of chromosomal replication. ATP-DnaA binds to the origin of replication (oriC) to initiate formation of the DNA replication initiation complex once per cell cycle. Binds the DnaA box (a 9 base pair repeat at the origin) and separates the double-stranded (ds)DNA. Forms a right-handed helical filament on oriC DNA; dsDNA binds to the exterior of the filament while single-stranded (ss)DNA is stabiized in the filament's interior. The ATP-DnaA-oriC complex binds and stabilizes one strand of the AT-rich DNA unwinding element (DUE), permitting loading of DNA polymerase. After initiation quickly degrades to an ADP-DnaA complex that is not apt for DNA replication. Binds acidic phospholipids. The protein is Chromosomal replication initiator protein DnaA of Mesorhizobium japonicum (strain LMG 29417 / CECT 9101 / MAFF 303099) (Mesorhizobium loti (strain MAFF 303099)).